A 534-amino-acid chain; its full sequence is Monolignol oxidoreductase AtBBE-like 13 (534 aa).

An N-terminal signal peptide occupies residues 1 to 29 (MAFVLMNNTNAFLVTLLLLSLSYIPLSFS). N-linked (GlcNAc...) asparagine glycosylation is found at Asn-7 and Asn-59. A disulfide bond links Cys-38 and Cys-102. The 6-(S-cysteinyl)-8alpha-(pros-histidyl)-FAD (His-Cys) cross-link spans 117–181 (HDYEGLSYVS…KIHGFPAGLC (65 aa)).

It belongs to the oxygen-dependent FAD-linked oxidoreductase family. FAD is required as a cofactor. Post-translationally, the FAD cofactor is bound via a bicovalent 6-S-cysteinyl, 8alpha-N1-histidyl FAD linkage.

It is found in the secreted. The protein resides in the cell wall. It catalyses the reaction (E)-4-coumaroyl alcohol + A = (E)-4-coumaraldehyde + AH2. The catalysed reaction is (E)-coniferol + A = (E)-coniferaldehyde + AH2. The enzyme catalyses (E)-sinapyl alcohol + A = (E)-sinapaldehyde + AH2. It functions in the pathway phenylpropanoid metabolism. In terms of biological role, mediates oxidation of p-hydroxylated derivatives of cinnamyl alcohol (i.e. the monolignols p-coumaryl-, coniferyl-, and sinapyl alcohol) to their corresponding aldehydes. The electron acceptor required for these reactions is not known, but does not seem to be dioxygen. Is much less efficient towards cinnamyl alcohol. This chain is Monolignol oxidoreductase AtBBE-like 13, found in Arabidopsis thaliana (Mouse-ear cress).